Consider the following 325-residue polypeptide: Glutarate 2-hydroxylase (325 aa).

Histidine 160, aspartate 162, and histidine 292 together coordinate Fe cation.

Belongs to the glutarate hydroxylase family. In terms of assembly, homotetramer. The cofactor is Fe(2+).

The enzyme catalyses glutarate + 2-oxoglutarate + O2 = (S)-2-hydroxyglutarate + succinate + CO2. The protein operates within amino-acid degradation. Its function is as follows. Acts as an alpha-ketoglutarate-dependent dioxygenase catalyzing hydroxylation of glutarate (GA) to L-2-hydroxyglutarate (L2HG). Functions in a L-lysine degradation pathway that proceeds via cadaverine, glutarate and L-2-hydroxyglutarate. The polypeptide is Glutarate 2-hydroxylase (Klebsiella pneumoniae (strain 342)).